Reading from the N-terminus, the 118-residue chain is UPF0449 protein C19orf25 homolog (118 aa).

At Y63 the chain carries Phosphotyrosine. Positions 69-105 (YVAMNQRLQQAGAQLEQKRADLQQAGEELERDISQVG) form a coiled coil.

It belongs to the UPF0449 family.

The protein is UPF0449 protein C19orf25 homolog of Bos taurus (Bovine).